The chain runs to 500 residues: Lysine--tRNA ligase (500 aa).

Mg(2+) is bound by residues Glu-402 and Glu-409.

Belongs to the class-II aminoacyl-tRNA synthetase family. In terms of assembly, homodimer. Mg(2+) is required as a cofactor.

The protein localises to the cytoplasm. The catalysed reaction is tRNA(Lys) + L-lysine + ATP = L-lysyl-tRNA(Lys) + AMP + diphosphate. The chain is Lysine--tRNA ligase from Buchnera aphidicola subsp. Baizongia pistaciae (strain Bp).